The sequence spans 232 residues: MASLNDICYEKIKDNFYYGLFRDFKLVVDKNTECFNATKLCNSGGKQFRQWTRLEKSKKLMEYYSRRGSQQMYEIKGDNKDQLVTQTTGTYAPIDFFEDIKRWIQLPKASSASGVVYVVTTSILQVHNVFKIGYTKNFEERLKTFNDYRHSLEPQFFAVAIYDTDNAKKLETTIHKKLKDFRSEGEFFQVELSVIKEAFLKEDCCLKDLDYEEDHSNSFTDLNDKLKTLNII.

The 105-residue stretch at 15-119 (NFYYGLFRDF…SSASGVVYVV (105 aa)) folds into the KilA-N domain.

In Acheta domesticus (House cricket), this protein is Putative KilA-N domain-containing protein 315L.